We begin with the raw amino-acid sequence, 237 residues long: DCN1-like protein 5 (237 aa).

Phosphoserine is present on residues serine 9, serine 41, and serine 48. The DCUN1 domain maps to 46–232; sequence FSSKKCLAWF…LLDEFVEWQK (187 aa).

As to quaternary structure, part of a complex that contains DCUN1D5, CUL1 and RBX1; this interaction is bridged by CUL1. Interacts (via the DCUN1 domain) with the unneddylated cullins: interacts with CUL1, CUL2, CUL3, CUL4A, CUL4B and CUL5; these interactions promote the cullin neddylation and the identity of the cullin dictates the affinity of the interaction. Interacts (via DCUN1 domain) with UBE2M (N-terminally acetylated form) and probably with UBE2F (N-terminally acetylated form). May also interact with regulators or subunits of cullin-RING ligases such as RBX1, RNF7, ELOB and DDB1; these interactions are bridged by cullins. Interacts with CAND1; this interaction is bridged by cullins and strongly inhibits the neddylation of cullins. These CAND-cullin-DCNL complexes can only be neddylated in the presence of a substrate adapter. In terms of processing, phosphorylation at Ser-41 is independent of cullin's interaction. Phosphorylated in response to both TICAM1 and MYD88 dependent Toll-like receptor (TLR) pathway activation. Phosphorylated in response to IL1B stimulation. Weakly expressed in testis, skin and immune tissues (thymus, spleen and lymph nodes).

The protein resides in the nucleus. It is found in the cytoplasm. The protein localises to the cytoskeleton. Its subcellular location is the spindle. Contributes to the neddylation of all cullins by transferring NEDD8 from N-terminally acetylated NEDD8-conjugating E2s enzyme to different cullin C-terminal domain-RBX complexes which is necessary for the activation of cullin-RING E3 ubiquitin ligases (CRLs). May play a role in DNA damage response and may participate in cell proliferation and anchorage-independent cell growth. This chain is DCN1-like protein 5, found in Homo sapiens (Human).